Reading from the N-terminus, the 473-residue chain is UDP-glycosyltransferase 91D2 (473 aa).

Catalysis depends on histidine 26, which acts as the Proton acceptor. Residue histidine 26 coordinates an anthocyanidin. The active-site Charge relay is aspartate 121. UDP-alpha-D-glucose-binding residues include alanine 344, glutamine 346, histidine 361, serine 366, and glutamate 369. Position 384 (glycine 384) interacts with an anthocyanidin. Positions 385 and 386 each coordinate UDP-alpha-D-glucose.

This sequence belongs to the UDP-glycosyltransferase family.

It carries out the reaction steviolmonoside + UDP-alpha-D-glucose = steviolbioside + UDP + H(+). It catalyses the reaction rubusoside + UDP-alpha-D-glucose = stevioside + UDP + H(+). The catalysed reaction is stevioside + UDP-alpha-D-glucose = rebaudioside E + UDP + H(+). The enzyme catalyses rebaudioside A + UDP-alpha-D-glucose = rebaudioside D + UDP + H(+). Involved in the biosynthesis of steviol glycosides in leaves. Converts the mono-glycoside steviolmonoside to the bi-glycoside steviolbioside. Converts the bi-glycoside rubusoside to the tri-glycoside stevioside. Converts the tri-glycoside stevioside to the tetra-glycoside rebaudioside E. Converts the tetra-glycoside rebaudioside A to the penta-glycoside rebaudioside E. The protein is UDP-glycosyltransferase 91D2 of Stevia rebaudiana (Stevia).